A 312-amino-acid polypeptide reads, in one-letter code: Protoheme IX farnesyltransferase (312 aa).

The Cytoplasmic segment spans residues 1–36 (MNKSNTAIDPTNVIEAGPDSSVADVQQKSWKDYLVL). Residues 37 to 55 (AKQGIVTSNLITTFAGIYL) traverse the membrane as a helical segment. Topologically, residues 56–69 (AIVYTGTVFTMHLD) are extracellular. The chain crosses the membrane as a helical span at residues 70 to 88 (TMIFALLGAALVMAGGCTL). The Cytoplasmic segment spans residues 89–110 (NNYIDRDIDHLMERTKERPTVT). Residues 111–129 (GRFSAKHVLLVGLAQAALG) form a helical membrane-spanning segment. The Extracellular portion of the chain corresponds to 130–138 (IIFLALTTP). A helical membrane pass occupies residues 139–157 (TAAVIGLIGLFIYVVLYTM). Residues 158–228 (WTKRTTTLNT…YRAAGIPMLP (71 aa)) lie on the Cytoplasmic side of the membrane. Residues 229-247 (VVAGFEMTKRQMVVYVAAL) form a helical membrane-spanning segment. Topologically, residues 248 to 259 (LPVSLMLYPFGL) are extracellular. Residues 260–275 (VYTIVAAVLGVGWLAL) traverse the membrane as a helical segment. The Cytoplasmic portion of the chain corresponds to 276-296 (GIAGFKMKDDIKWARLMFVYS). A helical membrane pass occupies residues 297 to 307 (LNYLTILFVLM). Residues 308–312 (VIVHF) are Extracellular-facing.

The protein belongs to the UbiA prenyltransferase family.

It is found in the cell membrane. It carries out the reaction heme b + (2E,6E)-farnesyl diphosphate + H2O = Fe(II)-heme o + diphosphate. It functions in the pathway porphyrin-containing compound metabolism; heme O biosynthesis; heme O from protoheme: step 1/1. In terms of biological role, converts protoheme IX and farnesyl diphosphate to heme O. The chain is Protoheme IX farnesyltransferase (ctaB) from Alkalihalophilus pseudofirmus (strain ATCC BAA-2126 / JCM 17055 / OF4) (Bacillus pseudofirmus).